We begin with the raw amino-acid sequence, 210 residues long: Na(+)-translocating NADH-quinone reductase subunit D (210 aa).

6 consecutive transmembrane segments (helical) span residues 14 to 34 (PIISNNPIALQILGVCSALAV), 42 to 62 (LVMTIALTAVTALSNLFISMI), 72 to 92 (IIVQMTIIASLVIVVDQVLQA), 103 to 123 (VFVGLIITNCIVMGRAEAYAM), 131 to 151 (FMDGIGNGLGYGAILLSVGFV), and 178 to 198 (NGLLLLPPSAFFLIASLIWII).

This sequence belongs to the NqrDE/RnfAE family. As to quaternary structure, composed of six subunits; NqrA, NqrB, NqrC, NqrD, NqrE and NqrF.

The protein resides in the cell inner membrane. The enzyme catalyses a ubiquinone + n Na(+)(in) + NADH + H(+) = a ubiquinol + n Na(+)(out) + NAD(+). NQR complex catalyzes the reduction of ubiquinone-1 to ubiquinol by two successive reactions, coupled with the transport of Na(+) ions from the cytoplasm to the periplasm. NqrA to NqrE are probably involved in the second step, the conversion of ubisemiquinone to ubiquinol. The polypeptide is Na(+)-translocating NADH-quinone reductase subunit D (Shewanella loihica (strain ATCC BAA-1088 / PV-4)).